We begin with the raw amino-acid sequence, 301 residues long: tRNA dimethylallyltransferase (301 aa).

5–12 (GPTASGKS) contributes to the ATP binding site. 7 to 12 (TASGKS) serves as a coordination point for substrate. Positions 30–33 (DSMQ) are interaction with substrate tRNA.

Belongs to the IPP transferase family. In terms of assembly, monomer. The cofactor is Mg(2+).

The enzyme catalyses adenosine(37) in tRNA + dimethylallyl diphosphate = N(6)-dimethylallyladenosine(37) in tRNA + diphosphate. Catalyzes the transfer of a dimethylallyl group onto the adenine at position 37 in tRNAs that read codons beginning with uridine, leading to the formation of N6-(dimethylallyl)adenosine (i(6)A). This chain is tRNA dimethylallyltransferase, found in Rhodopseudomonas palustris (strain TIE-1).